The following is a 472-amino-acid chain: P2X purinoceptor 2 (472 aa).

Topologically, residues 1–34 (MVRRLARGCWSAFWDYETPKVIVVRNRRLGFVHR) are cytoplasmic. Cystine bridges form between cysteine 9–cysteine 430, cysteine 113–cysteine 164, cysteine 124–cysteine 147, cysteine 130–cysteine 158, cysteine 214–cysteine 224, and cysteine 258–cysteine 267. A helical membrane pass occupies residues 35 to 52 (MVQLLILLYFVWYVFIVQ). Residues 53–326 (KSYQDSETGP…IVHGQAGKFS (274 aa)) lie on the Extracellular side of the membrane. Positions 69 and 71 each coordinate ATP. Asparagine 182 is a glycosylation site (N-linked (GlcNAc...) asparagine). Threonine 184 contributes to the ATP binding site. N-linked (GlcNAc...) asparagine glycosylation is present at asparagine 239. 3 residues coordinate ATP: serine 284, asparagine 288, and arginine 290. The N-linked (GlcNAc...) asparagine glycan is linked to asparagine 298. Residue lysine 308 participates in ATP binding. The tract at residues 309-322 (AYGIRIDVIVHGQA) is pore-forming motif. A helical membrane pass occupies residues 327–347 (LIPTIINLATALTSIGVGSFL). Over 348–472 (CDWILLTFMN…STDPKGLAQL (125 aa)) the chain is Cytoplasmic. A disordered region spans residues 393–472 (PPPSHYSQDQ…STDPKGLAQL (80 aa)). Positions 456–465 (PSQQDSTSTD) are enriched in polar residues.

This sequence belongs to the P2X receptor family. As to quaternary structure, homotrimer and heterotrimer; functional P2XRs are organized as homomeric and heteromeric trimers. Homotrimer. Forms heterotrimer with P2RX1. Forms heterotrimer with P2RX6. Forms heterotrimer with P2RX3. In terms of tissue distribution, high levels in pituitary and vas deferens. Lower extent in spinal cord, bladder, brain, adrenal, testis, sensory epithelia from the inner ear.

The protein resides in the cell membrane. It catalyses the reaction Ca(2+)(in) = Ca(2+)(out). The catalysed reaction is K(+)(in) = K(+)(out). It carries out the reaction Na(+)(in) = Na(+)(out). Fast activation by external ATP. Exhibits slow desensitization during prolonged ATP activation. Not sensitive to the ATP agonist:alpha/beta-methylene-ATP. In terms of biological role, ATP-gated nonselective transmembrane cation channel permeable to potassium, sodium and calcium. Activation by extracellular ATP induces a variety of cellular responses, such as excitatory postsynaptic responses in sensory neurons, neuromuscular junctions (NMJ) formation, hearing, perception of taste and peristalsis. In the inner ear, regulates sound transduction and auditory neurotransmission, outer hair cell electromotility, inner ear gap junctions, and K(+) recycling. Mediates synaptic transmission between neurons and from neurons to smooth muscle. This Rattus norvegicus (Rat) protein is P2X purinoceptor 2 (P2rx2).